The following is a 439-amino-acid chain: Xylose isomerase (439 aa).

Catalysis depends on residues H101 and D104. The Mg(2+) site is built by E232, E268, H271, D296, D307, D309, and D339.

The protein belongs to the xylose isomerase family. In terms of assembly, homotetramer. It depends on Mg(2+) as a cofactor.

Its subcellular location is the cytoplasm. The catalysed reaction is alpha-D-xylose = alpha-D-xylulofuranose. The chain is Xylose isomerase (xylA) from Thermoanaerobacterium thermosaccharolyticum (strain ATCC 7956 / DSM 571 / NCIMB 9385 / NCA 3814 / NCTC 13789 / WDCM 00135 / 2032) (Clostridium thermosaccharolyticum).